The sequence spans 308 residues: MLPPYFLFKEMTDTQYIGRFAPSPSGELHFGSLIAALGSYLQARARHGRWLVRIEDIDPPREVPGAAETILRQLEHYGLHWDGDVLWQSQRHHAYREALAWLHEQGLSYYCTCTRARIQSIGGIYDGHCRVLHHGPDNAAVRIRQQHPVTQFTDQLRGIIHADEKLAREDFIIHRRDGLFAYNLAVVVDDHFQGVSEIVRGADLIEPTVRQISLYQLFGWKVPDYIHLPLALNPQGAKLSKQNHAPALPKGDPRPVLIAALQFLGQQAEAHWQDFSVEQILQSAVKNWRLTAVPESAIVNSTFSNASC.

Residues 19-23 (RFAPS) and Glu55 contribute to the L-glutamate site. A 'HIGH' region motif is present at residues 22–32 (PSPSGELHFGS). Zn(2+)-binding residues include Cys111, Cys113, Tyr125, and Cys129. The L-glutamate site is built by Tyr182 and Arg200. A 'KMSKS' region motif is present at residues 238-242 (KLSKQ). Residue Lys241 participates in ATP binding.

This sequence belongs to the class-I aminoacyl-tRNA synthetase family. GluQ subfamily. The cofactor is Zn(2+).

Catalyzes the tRNA-independent activation of glutamate in presence of ATP and the subsequent transfer of glutamate onto a tRNA(Asp). Glutamate is transferred on the 2-amino-5-(4,5-dihydroxy-2-cyclopenten-1-yl) moiety of the queuosine in the wobble position of the QUC anticodon. The polypeptide is Glutamyl-Q tRNA(Asp) synthetase (Escherichia coli O157:H7).